The primary structure comprises 325 residues: GTPase Era (325 aa).

The Era-type G domain occupies 30–198; the sequence is HCGFVAIVGR…KKHVRDHLPK (169 aa). The tract at residues 38 to 45 is G1; sequence GRPNVGKS. 38–45 contacts GTP; that stretch reads GRPNVGKS. The segment at 64–68 is G2; the sequence is QTTRH. Residues 85 to 88 form a G3 region; sequence DTPG. GTP contacts are provided by residues 85–89 and 147–150; these read DTPGL and NKVD. The tract at residues 147 to 150 is G4; the sequence is NKVD. The interval 177 to 179 is G5; that stretch reads ISA. Residues 221–307 form the KH type-2 domain; sequence VREKLMRFTG…YLETWVKVKS (87 aa).

Belongs to the TRAFAC class TrmE-Era-EngA-EngB-Septin-like GTPase superfamily. Era GTPase family. In terms of assembly, monomer.

The protein resides in the cytoplasm. It localises to the cell inner membrane. Its function is as follows. An essential GTPase that binds both GDP and GTP, with rapid nucleotide exchange. Plays a role in 16S rRNA processing and 30S ribosomal subunit biogenesis and possibly also in cell cycle regulation and energy metabolism. This chain is GTPase Era, found in Vibrio cholerae serotype O1 (strain ATCC 39315 / El Tor Inaba N16961).